The primary structure comprises 315 residues: HPr kinase/phosphorylase (315 aa).

Catalysis depends on residues His-140 and Lys-161. Residue 155–162 coordinates ATP; sequence GDSGVGKS. Ser-162 contacts Mg(2+). The Proton acceptor; for phosphorylation activity. Proton donor; for dephosphorylation activity role is filled by Asp-179. The interval 203–212 is important for the catalytic mechanism of both phosphorylation and dephosphorylation; the sequence is LEIRGIGIID. Glu-204 is a binding site for Mg(2+). The active site involves Arg-245. The important for the catalytic mechanism of dephosphorylation stretch occupies residues 266–271; that stretch reads PVKTGR.

The protein belongs to the HPrK/P family. Homohexamer. Requires Mg(2+) as cofactor.

It catalyses the reaction [HPr protein]-L-serine + ATP = [HPr protein]-O-phospho-L-serine + ADP + H(+). The enzyme catalyses [HPr protein]-O-phospho-L-serine + phosphate + H(+) = [HPr protein]-L-serine + diphosphate. Catalyzes the ATP- as well as the pyrophosphate-dependent phosphorylation of a specific serine residue in HPr, a phosphocarrier protein of the phosphoenolpyruvate-dependent sugar phosphotransferase system (PTS). HprK/P also catalyzes the pyrophosphate-producing, inorganic phosphate-dependent dephosphorylation (phosphorolysis) of seryl-phosphorylated HPr (P-Ser-HPr). The two antagonistic activities of HprK/P are regulated by several intracellular metabolites, which change their concentration in response to the absence or presence of rapidly metabolisable carbon sources (glucose, fructose, etc.) in the growth medium. Therefore, by controlling the phosphorylation state of HPr, HPrK/P is a sensor enzyme that plays a major role in the regulation of carbon metabolism and sugar transport: it mediates carbon catabolite repression (CCR), and regulates PTS-catalyzed carbohydrate uptake and inducer exclusion. In Lactiplantibacillus plantarum (strain ATCC BAA-793 / NCIMB 8826 / WCFS1) (Lactobacillus plantarum), this protein is HPr kinase/phosphorylase.